A 312-amino-acid polypeptide reads, in one-letter code: MAVYLDFENHIKEIQNEIELALIRGDEDAKEILEKRLDKEVKSIYSNLTDFQKLQLARHPDRPYAMDYIDLILKDKYEVFGDRHYNDDKAIVCFVGKIDNVPVVVIGEEKGRGTKNKLLRNFGMPNPCGYRKALKMAKFAEKFNLPILMLVDTAGAYPGIGAEERGQSEAIAKNLQEFASLKVPTISVIIGEGGSGGALAIAVADKLAMMEYSIFSVISPEGCAAILWDDPSKTEVAIKAMKITPRDLKEAGLIDDIILEPSKGAHRDKFSAANTIKEYFLDALRTIQQDPHFLDNRYQKLMSLGSFVESMN.

The 251-residue stretch at 36–286 (RLDKEVKSIY…KEYFLDALRT (251 aa)) folds into the CoA carboxyltransferase C-terminal domain.

The protein belongs to the AccA family. In terms of assembly, acetyl-CoA carboxylase is a heterohexamer composed of biotin carboxyl carrier protein (AccB), biotin carboxylase (AccC) and two subunits each of ACCase subunit alpha (AccA) and ACCase subunit beta (AccD).

It is found in the cytoplasm. The catalysed reaction is N(6)-carboxybiotinyl-L-lysyl-[protein] + acetyl-CoA = N(6)-biotinyl-L-lysyl-[protein] + malonyl-CoA. It functions in the pathway lipid metabolism; malonyl-CoA biosynthesis; malonyl-CoA from acetyl-CoA: step 1/1. Component of the acetyl coenzyme A carboxylase (ACC) complex. First, biotin carboxylase catalyzes the carboxylation of biotin on its carrier protein (BCCP) and then the CO(2) group is transferred by the carboxyltransferase to acetyl-CoA to form malonyl-CoA. In Helicobacter pylori (strain ATCC 700392 / 26695) (Campylobacter pylori), this protein is Acetyl-coenzyme A carboxylase carboxyl transferase subunit alpha.